Consider the following 405-residue polypeptide: Probable tRNA sulfurtransferase (405 aa).

The THUMP domain occupies 60–165; that stretch reads DAVINRLKKV…SNGIFLTSEV (106 aa). ATP contacts are provided by residues 183 to 184, 208 to 209, Arg-265, Gly-287, and Gln-296; these read ML and HF.

This sequence belongs to the ThiI family.

The protein localises to the cytoplasm. The catalysed reaction is [ThiI sulfur-carrier protein]-S-sulfanyl-L-cysteine + a uridine in tRNA + 2 reduced [2Fe-2S]-[ferredoxin] + ATP + H(+) = [ThiI sulfur-carrier protein]-L-cysteine + a 4-thiouridine in tRNA + 2 oxidized [2Fe-2S]-[ferredoxin] + AMP + diphosphate. It carries out the reaction [ThiS sulfur-carrier protein]-C-terminal Gly-Gly-AMP + S-sulfanyl-L-cysteinyl-[cysteine desulfurase] + AH2 = [ThiS sulfur-carrier protein]-C-terminal-Gly-aminoethanethioate + L-cysteinyl-[cysteine desulfurase] + A + AMP + 2 H(+). The protein operates within cofactor biosynthesis; thiamine diphosphate biosynthesis. Its function is as follows. Catalyzes the ATP-dependent transfer of a sulfur to tRNA to produce 4-thiouridine in position 8 of tRNAs, which functions as a near-UV photosensor. Also catalyzes the transfer of sulfur to the sulfur carrier protein ThiS, forming ThiS-thiocarboxylate. This is a step in the synthesis of thiazole, in the thiamine biosynthesis pathway. The sulfur is donated as persulfide by IscS. This chain is Probable tRNA sulfurtransferase, found in Pediococcus pentosaceus (strain ATCC 25745 / CCUG 21536 / LMG 10740 / 183-1w).